The following is a 631-amino-acid chain: Dolichyl-diphosphooligosaccharide--protein glycosyltransferase subunit 2 (631 aa).

The signal sequence occupies residues 1-22 (MALPGSSTVFLLALTIIASTQA). Over 23–540 (LTPTHYLTKH…REPEKRPPTV (518 aa)) the chain is Lumenal. N-linked (GlcNAc...) asparagine glycosylation occurs at N106. A Glycyl lysine isopeptide (Lys-Gly) (interchain with G-Cter in ubiquitin) cross-link involves residue K154. Residues 541–561 (VSNTFTALILSPLLLLFALWI) form a helical membrane-spanning segment. At 562 to 571 (RIGANVSNFT) the chain is on the cytoplasmic side. Residues 572 to 592 (FAPSTIVFHLGHAAMLGLMYV) traverse the membrane as a helical segment. Residues 593–596 (YWTQ) lie on the Lumenal side of the membrane. Residues 597-617 (LNMFQTLKYLAILGSVTFLAG) form a helical membrane-spanning segment. At 618 to 631 (NRMLAQQAIKRTAH) the chain is on the cytoplasmic side.

It belongs to the SWP1 family. In terms of assembly, component of the oligosaccharyltransferase (OST) complex. OST exists in two different complex forms which contain common core subunits RPN1, RPN2, OST48, OST4, DAD1 and TMEM258, either STT3A or STT3B as catalytic subunits, and form-specific accessory subunits. STT3A complex assembly occurs through the formation of 3 subcomplexes. Subcomplex 1 contains RPN1 and TMEM258, subcomplex 2 contains the STT3A-specific subunits STT3A, DC2/OSTC, and KCP2 as well as the core subunit OST4, and subcomplex 3 contains RPN2, DAD1, and OST48. The STT3A complex can form stable complexes with the Sec61 complex or with both the Sec61 and TRAP complexes. Interacts with DDI2. Interacts with TMEM35A/NACHO.

Its subcellular location is the endoplasmic reticulum. The protein localises to the endoplasmic reticulum membrane. The protein operates within protein modification; protein glycosylation. Its function is as follows. Subunit of the oligosaccharyl transferase (OST) complex that catalyzes the initial transfer of a defined glycan (Glc(3)Man(9)GlcNAc(2) in eukaryotes) from the lipid carrier dolichol-pyrophosphate to an asparagine residue within an Asn-X-Ser/Thr consensus motif in nascent polypeptide chains, the first step in protein N-glycosylation. N-glycosylation occurs cotranslationally and the complex associates with the Sec61 complex at the channel-forming translocon complex that mediates protein translocation across the endoplasmic reticulum (ER). All subunits are required for a maximal enzyme activity. The sequence is that of Dolichyl-diphosphooligosaccharide--protein glycosyltransferase subunit 2 from Bos taurus (Bovine).